A 551-amino-acid polypeptide reads, in one-letter code: E3 ubiquitin-protein ligase HEL1 (551 aa).

Positions 175-388 (NDFTCIICCD…KNFFQCTMYK (214 aa)) are TRIAD supradomain. 10 residues coordinate Zn(2+): C179, C182, C200, C203, C301, C304, H309, C314, C341, and C344. An RING-type 1 zinc finger spans residues 179 to 225 (CIICCDKKDTETFALECGHEYCINCYRHYIKDKLHEGNIITCMDCSL). The segment at 242-314 (SKLMDSSIKS…GFEVHSPADC (73 aa)) adopts an IBR-type zinc-finger fold. The segment at 341–370 (CPKCSVNIEKNGGCNHMVCSSCKYEFCWIC) adopts an RING-type 2; atypical zinc-finger fold. C354 is a catalytic residue. 6 residues coordinate Zn(2+): C359, C362, C367, C370, H377, and C384.

This sequence belongs to the RBR family. As to quaternary structure, interacts with the E2 ubiquitin-conjugating enzyme UBC4 and histones H3 and H4.

It carries out the reaction [E2 ubiquitin-conjugating enzyme]-S-ubiquitinyl-L-cysteine + [acceptor protein]-L-lysine = [E2 ubiquitin-conjugating enzyme]-L-cysteine + [acceptor protein]-N(6)-ubiquitinyl-L-lysine.. It participates in protein modification; protein ubiquitination. In terms of biological role, probable ubiquitin-protein ligase involved in the degradation-related ubiquitination of histones. Contributes to the post-translational regulation of histone protein levels by polyubiquitination of excess histones for subsequent degradation. The polypeptide is E3 ubiquitin-protein ligase HEL1 (Saccharomyces cerevisiae (strain ATCC 204508 / S288c) (Baker's yeast)).